The chain runs to 688 residues: MKVQITNSRTEEILKVQANNENDEVSKATPGEVEESLRLIGDLKFFLATAPVNWQENQIIRRYYLNSGQGFVSCVFWNNLYYITGTDIVKCCLYRMQKFGREVVQKKKFEEGIFSDLRNLKCGIDATLEQPKSEFLSFLFRNMCLKTQKKQKVFFWFSVAHDKLFADALERDLKRESLNQPSTTKPVNEPALSFSYDSSSDKPLYDQLLQHLDSRRPSSTTKSDNSPPKLESENFKDNELVTVTNQPLLGVGLMDDDAPESPSQINDFIPQKLIIEPNTLELNGLTEETPHDLPKNTAKGRDEEDFPLDYFPVSVEYPTEENAFDPFPPQAFTPAAPSMPISYDNVNERDSMPVNSLLNRYPYQLSVAPTFPVPPSSSRQHFMTNRDFYSSNNNKEKLVSPSDPTSYMKYDEPVMDFDESRPNENCTNAKSHNSGQQTKQHQLYSNNFQQSYPNGMVPGYYPKMPYNPMGGDPLLDQAFYGADDFFFPPEGCDNNMLYPQTATSWNVLPPQAMQPAPTYVGRPYTPNYRSTPGSAMFPYMQSSNSMQWNTAVSPYSSRAPSTTAKNYPPSTFYSQNINQYPRRRTVGMKSSQGNVPTGNKQSVGKSAKISKPLHIKTSAYQKQYKINLETKARPSAGDEDSAHPDKNKEISMPTPDSNTLVVQSEEGGAHSLEVDTNRRSDKNLPDAT.

Thr-29 carries the post-translational modification Phosphothreonine. A DNA-binding region spans residues 57–167 (NQIIRRYYLN…SVAHDKLFAD (111 aa)). Disordered stretches follow at residues 177–199 (SLNQ…YDSS), 211–239 (HLDS…KDNE), and 285–305 (LTEE…DEED). Phosphoserine is present on residues Ser-214 and Ser-226. Polar residues predominate over residues 217–226 (PSSTTKSDNS). Composition is skewed to basic and acidic residues over residues 230–239 (LESENFKDNE) and 288–302 (ETPH…KGRD). Thr-289 is modified (phosphothreonine). Residue Ser-400 is modified to Phosphoserine. Disordered regions lie at residues 587-610 (GMKS…AKIS) and 630-688 (TKAR…PDAT). A compositionally biased stretch (polar residues) spans 588-604 (MKSSQGNVPTGNKQSVG). Composition is skewed to basic and acidic residues over residues 640-649 (DSAHPDKNKE) and 672-688 (LEVD…PDAT).

The protein belongs to the STE12 transcription factor family. As to quaternary structure, interacts with mating-type protein ALPHA1. Phosphorylated by the STE7, STE11 and STE20 kinases.

It localises to the nucleus. Binds to the DNA sequence mediating pheromone induction (called the pheromone response element = PRE) which is found in the upstream control region of several a-, alpha- and haploid-specific genes. Involved in mating of haploids and in pseudohyphae formation in diploids. This chain is Protein STE12 (STE12), found in Saccharomyces cerevisiae (strain ATCC 204508 / S288c) (Baker's yeast).